Consider the following 770-residue polypeptide: Coiled-coil alpha-helical rod protein 1 (770 aa).

3 coiled-coil regions span residues 56–289, 334–420, and 476–669; these read STVT…DLQA, LRNW…RQEQ, and GLMA…RKEE. 4 disordered regions span residues 573–592, 641–672, 700–721, and 744–770; these read LEAARRGQQESTEEAASLRQ, LRQIQHKATQEKERNQELRRLQDEARKEEGQR, NKKCSPRSVESSSSESPAAASC, and SRDEDICVEDNQNTKKTKNPPSDPLLS. Positions 648–672 are enriched in basic and acidic residues; it reads ATQEKERNQELRRLQDEARKEEGQR. Residues 701-721 show a composition bias toward low complexity; the sequence is KKCSPRSVESSSSESPAAASC.

Its subcellular location is the cytoplasm. The protein localises to the nucleus. In terms of biological role, may be a regulator of keratinocyte proliferation or differentiation. The sequence is that of Coiled-coil alpha-helical rod protein 1 (Cchcr1) from Mus musculus (Mouse).